We begin with the raw amino-acid sequence, 100 residues long: Urease subunit gamma 2 (100 aa).

This sequence belongs to the urease gamma subunit family. In terms of assembly, heterotrimer of UreA (gamma), UreB (beta) and UreC (alpha) subunits. Three heterotrimers associate to form the active enzyme.

The protein localises to the cytoplasm. The catalysed reaction is urea + 2 H2O + H(+) = hydrogencarbonate + 2 NH4(+). It functions in the pathway nitrogen metabolism; urea degradation; CO(2) and NH(3) from urea (urease route): step 1/1. Functionally, disrupting the ure2 operon has no effect on urease activity or pathogen survival in BALB/c mice when administered orally. This chain is Urease subunit gamma 2, found in Brucella abortus (strain 2308).